The following is a 65-amino-acid chain: Large ribosomal subunit protein bL35 (65 aa).

Belongs to the bacterial ribosomal protein bL35 family.

The polypeptide is Large ribosomal subunit protein bL35 (Thiobacillus denitrificans (strain ATCC 25259 / T1)).